Reading from the N-terminus, the 551-residue chain is Arginine--tRNA ligase (551 aa).

The short motif at 123-133 (ANPTGPLTIGR) is the 'HIGH' region element.

It belongs to the class-I aminoacyl-tRNA synthetase family. As to quaternary structure, monomer.

It is found in the cytoplasm. It carries out the reaction tRNA(Arg) + L-arginine + ATP = L-arginyl-tRNA(Arg) + AMP + diphosphate. The chain is Arginine--tRNA ligase from Chlorobium limicola (strain DSM 245 / NBRC 103803 / 6330).